A 378-amino-acid polypeptide reads, in one-letter code: Zinc finger protein DPF3 (378 aa).

A Glycyl lysine isopeptide (Lys-Gly) (interchain with G-Cter in SUMO2) cross-link involves residue Lys-99. Positions 146–193 (LENDENVEEGNEEEDLEEDVPKRKNRTRGRARGSAGGRRRHDAASQED) are disordered. Residues 148–163 (NDENVEEGNEEEDLEE) show a composition bias toward acidic residues. A compositionally biased stretch (basic residues) spans 168–186 (RKNRTRGRARGSAGGRRRH). The C2H2-type zinc finger occupies 198-221 (YVCDICGKRYKNRPGLSYHYAHTH). The disordered stretch occupies residues 225-254 (EEGDEAQDQETRSPPNHRNENHRPQKGPDG). 2 consecutive PHD-type zinc fingers follow at residues 259–319 (NNYC…CKSC) and 316–366 (CKSC…CWEL). Positions 317–332 (KSCILCGTSENDDQLL) are interaction with HDGFL2. The residue at position 323 (Gly-323) is a Phosphoserine.

This sequence belongs to the requiem/DPF family. In terms of assembly, component of the BAF complex, which includes at least actin (ACTB), ARID1A, ARID1B/BAF250, SMARCA2, SMARCA4/BRG1/BAF190A, ACTL6A/BAF53, ACTL6B/BAF53B, SMARCE1/BAF57, SMARCC1/BAF155, SMARCC2/BAF170, SMARCB1/SNF5/INI1, and one or more of SMARCD1/BAF60A, SMARCD2/BAF60B, or SMARCD3/BAF60C. In muscle cells, the BAF complex also contains DPF3. Interacts with acetylated histones H3 and H4. Component of neuron-specific chromatin remodeling complex (nBAF complex) composed of at least, ARID1A/BAF250A or ARID1B/BAF250B, SMARCD1/BAF60A, SMARCD3/BAF60C, SMARCA2/BRM/BAF190B, SMARCA4/BRG1/BAF190A, SMARCB1/BAF47, SMARCC1/BAF155, SMARCE1/BAF57, SMARCC2/BAF170, DPF1/BAF45B, DPF3/BAF45C, ACTL6B/BAF53B and actin. As to quaternary structure, interacts with HDGFL2. Interacts with SMARCA4/BRG1/BAF190A, SMARCC1/BAF155 and SMARCD1/BAF60A. In terms of tissue distribution, expressed in the heart and somites. Expressed in cerebellum and spinal cord, but not in cerebral cortex. Expressed specifically in post-mitotic neurons (at protein level).

Its subcellular location is the nucleus. In terms of biological role, muscle-specific component of the BAF complex, a multiprotein complex involved in transcriptional activation and repression of select genes by chromatin remodeling (alteration of DNA-nucleosome topology). Specifically binds acetylated lysines on histone 3 and 4 (H3K14ac, H3K9ac, H4K5ac, H4K8ac, H4K12ac, H4K16ac). In the complex, it acts as a tissue-specific anchor between histone acetylations and methylations and chromatin remodeling. It thereby probably plays an essential role in heart and skeletal muscle development. Belongs to the neuron-specific chromatin remodeling complex (nBAF complex). During neural development a switch from a stem/progenitor to a post-mitotic chromatin remodeling mechanism occurs as neurons exit the cell cycle and become committed to their adult state. The transition from proliferating neural stem/progenitor cells to post-mitotic neurons requires a switch in subunit composition of the npBAF and nBAF complexes. As neural progenitors exit mitosis and differentiate into neurons, npBAF complexes which contain ACTL6A/BAF53A and PHF10/BAF45A, are exchanged for homologous alternative ACTL6B/BAF53B and DPF1/BAF45B or DPF3/BAF45C subunits in neuron-specific complexes (nBAF). The npBAF complex is essential for the self-renewal/proliferative capacity of the multipotent neural stem cells. The nBAF complex along with CREST plays a role regulating the activity of genes essential for dendrite growth. Functionally, acts as a regulator of myogenesis in cooperation with HDGFL2. Mediates the interaction of HDGFL2 with the BAF complex. HDGFL2-DPF3a activate myogenic genes by increasing chromatin accessibility through recruitment of SMARCA4/BRG1/BAF190A (ATPase subunit of the BAF complex) to myogenic gene promoters. This is Zinc finger protein DPF3 (Dpf3) from Mus musculus (Mouse).